The primary structure comprises 401 residues: Argininosuccinate synthase (401 aa).

ATP is bound by residues 9 to 17 and A36; that span reads AYSGGLDTS. L-citrulline contacts are provided by Y87 and S92. ATP is bound at residue G117. Positions 119, 123, and 124 each coordinate L-aspartate. N123 provides a ligand contact to L-citrulline. L-citrulline contacts are provided by R127, S176, S185, E261, and Y273.

The protein belongs to the argininosuccinate synthase family. Type 1 subfamily. Homotetramer.

The protein resides in the cytoplasm. It catalyses the reaction L-citrulline + L-aspartate + ATP = 2-(N(omega)-L-arginino)succinate + AMP + diphosphate + H(+). It participates in amino-acid biosynthesis; L-arginine biosynthesis; L-arginine from L-ornithine and carbamoyl phosphate: step 2/3. This Syntrophobacter fumaroxidans (strain DSM 10017 / MPOB) protein is Argininosuccinate synthase.